The following is a 261-amino-acid chain: Small ribosomal subunit protein eS4 (261 aa).

Residues 42–104 (LPLVIFLRNR…TGEFFRLIYD (63 aa)) form the S4 RNA-binding domain.

This sequence belongs to the eukaryotic ribosomal protein eS4 family.

The sequence is that of Small ribosomal subunit protein eS4 (RpS4) from Carabus granulatus (Ground beetle).